The primary structure comprises 378 residues: Transaldolase 1 (378 aa).

Lys-146 serves as the catalytic Schiff-base intermediate with substrate.

Belongs to the transaldolase family. Type 2 subfamily.

The protein resides in the cytoplasm. The catalysed reaction is D-sedoheptulose 7-phosphate + D-glyceraldehyde 3-phosphate = D-erythrose 4-phosphate + beta-D-fructose 6-phosphate. It functions in the pathway carbohydrate degradation; pentose phosphate pathway; D-glyceraldehyde 3-phosphate and beta-D-fructose 6-phosphate from D-ribose 5-phosphate and D-xylulose 5-phosphate (non-oxidative stage): step 2/3. Functionally, transaldolase is important for the balance of metabolites in the pentose-phosphate pathway. This is Transaldolase 1 from Streptomyces avermitilis (strain ATCC 31267 / DSM 46492 / JCM 5070 / NBRC 14893 / NCIMB 12804 / NRRL 8165 / MA-4680).